The following is a 365-amino-acid chain: Flagellar P-ring protein (365 aa).

A signal peptide spans 1 to 19; the sequence is MIKFLSALILLLVITAAQA.

This sequence belongs to the FlgI family. In terms of assembly, the basal body constitutes a major portion of the flagellar organelle and consists of four rings (L,P,S, and M) mounted on a central rod.

The protein resides in the periplasm. It is found in the bacterial flagellum basal body. Assembles around the rod to form the L-ring and probably protects the motor/basal body from shearing forces during rotation. The polypeptide is Flagellar P-ring protein (Escherichia coli O81 (strain ED1a)).